Reading from the N-terminus, the 322-residue chain is MDETLLDDIIRRLLATNNGRTVKQAQITETEIRQLCLASKEVFLSQPNLLELEAPIKICGDVHGQFPDLLRLFEYGGYPPAANYLFLGDYVDRGKQSIETICLLLAYKVKYKFNFFLLRGNHECASINRVYGFYDECKRRYNVRLWKTFTECFNCLPVSALIDDKILCMHGGLSPDIKSLDDIRRIPRPIDVPDQGILCDLLWADPDREIQGWGENDRGVSYTFGADKVAEFLQTHDLDLICRAHQVVEDGYEFFAKRQLVTIFSAPNYCGEFDNAGALMSVDDSLTCSFQILKASEKKGRFGFNNNVPRPGTPPHKGGKGR.

Methionine 1 carries the N-acetylmethionine modification. Positions 61, 63, 89, and 121 each coordinate Mn(2+). The active-site Proton donor is histidine 122. Mn(2+)-binding residues include histidine 170 and histidine 245. Residues glycine 303–arginine 322 are disordered.

The protein belongs to the PPP phosphatase family. PP-1 subfamily. It depends on Mn(2+) as a cofactor. In terms of tissue distribution, strongly up-regulated within developing flowers, especially in the tapetum, the developing and mature pollen and in the ovaries.

The protein localises to the nucleus. The protein resides in the cytoplasm. It catalyses the reaction O-phospho-L-seryl-[protein] + H2O = L-seryl-[protein] + phosphate. The enzyme catalyses O-phospho-L-threonyl-[protein] + H2O = L-threonyl-[protein] + phosphate. With respect to regulation, phosphatase activity is strongly reduced by the protein phosphatase inhibitor 2 (I-2). Functionally, serine/threonine-protein phosphatase that possesses phosphatase activity toward para-nitrophenyl phosphate (pNPP) in vitro. This is Serine/threonine-protein phosphatase PP1 isozyme 6 from Arabidopsis thaliana (Mouse-ear cress).